Here is a 679-residue protein sequence, read N- to C-terminus: MSEPRQILVTSALPYANGSIHLGHMLEYIQTDMWVRFQKMRGNQCIYVCADDAHGSAIMLRAEKEGITPEQLIANVQAEHSSDFADFLVDFDNFHSTHSEENRELSSLIYTRLREAGHIATRSVTQYFDPEKGMFLADRFIKGTCPKCAAEDQYGDNCEKCGATYAPTELKNPKSAISGATPVLRDSQHFFFKLPDFQAMLQQWTRSGTLQDAVANKLAEWLDSGLQEWDISRDAPYFGFEIPGEPGKYFYVWLDAPIGYMASFKNLCARRPELDFDAFWNEGSKAELYHFIGKDIVNFHALFWPAMLEGAGFRKPTAVNVHGYLTVNGAKMSKSRGTFIKARTYLDHLQPEYLRYYYAAKLGRGVDDLDLNLEDFVQKVNSDLVGKVVNIASRCAGFIHKGNEGVMVSGDAAPELTEAFLTAAPSIAEAYEARDFGRAMREIMALADRANAWIADKAPWSLAKQEGKQDEVQAICAQGINLFRQLVIFLKPVLPVLAADAEAFLNVAPLTWSDHLSRLENHKLNPFKALMSRIEPAKVEAMVAASKEDLLATQAKAPAGNGELTKDPLSAEIEFDTFAAVDLRVALIVKAEAVAGADKLLQLTLDIGDERRNVFSGIKSAYPDPSKLEGRLTMMVANLKPRKMRFGVSEGMVMAAGPGGEEIYLLSPDSGAKPGQRIK.

A 'HIGH' region motif is present at residues 14–24 (PYANGSIHLGH). The Zn(2+) site is built by Cys-145, Cys-148, Cys-158, and Cys-161. The 'KMSKS' region signature appears at 331-335 (KMSKS). An ATP-binding site is contributed by Lys-334. Residues 577 to 679 (TFAAVDLRVA…SGAKPGQRIK (103 aa)) form the tRNA-binding domain.

The protein belongs to the class-I aminoacyl-tRNA synthetase family. MetG type 1 subfamily. Homodimer. The cofactor is Zn(2+).

The protein localises to the cytoplasm. It carries out the reaction tRNA(Met) + L-methionine + ATP = L-methionyl-tRNA(Met) + AMP + diphosphate. In terms of biological role, is required not only for elongation of protein synthesis but also for the initiation of all mRNA translation through initiator tRNA(fMet) aminoacylation. The protein is Methionine--tRNA ligase of Pseudomonas putida (strain GB-1).